A 309-amino-acid chain; its full sequence is Peptide methionine sulfoxide reductase MsrA/MsrB (309 aa).

A peptide methionine sulfoxide reductase A region spans residues 1–153; the sequence is MIYLAGGCFW…PNGYCHIDIN (153 aa). Residue cysteine 8 is part of the active site. The MsrB domain occupies 170–293; sequence ATEIKEKLSA…NSLSITFIPK (124 aa). Cysteine 282 functions as the Nucleophile in the catalytic mechanism.

It in the N-terminal section; belongs to the MsrA Met sulfoxide reductase family. In the C-terminal section; belongs to the MsrB Met sulfoxide reductase family.

It catalyses the reaction L-methionyl-[protein] + [thioredoxin]-disulfide + H2O = L-methionyl-(S)-S-oxide-[protein] + [thioredoxin]-dithiol. The enzyme catalyses [thioredoxin]-disulfide + L-methionine + H2O = L-methionine (S)-S-oxide + [thioredoxin]-dithiol. It carries out the reaction L-methionyl-[protein] + [thioredoxin]-disulfide + H2O = L-methionyl-(R)-S-oxide-[protein] + [thioredoxin]-dithiol. In terms of biological role, has an important function as a repair enzyme for proteins that have been inactivated by oxidation. Catalyzes the reversible oxidation-reduction of methionine sulfoxide in proteins to methionine. In Streptococcus pyogenes serotype M1, this protein is Peptide methionine sulfoxide reductase MsrA/MsrB (msrAB).